Here is a 541-residue protein sequence, read N- to C-terminus: 5' exonuclease Apollo (541 aa).

A Glycyl lysine isopeptide (Lys-Gly) (interchain with G-Cter in SUMO2) cross-link involves residue Lys-334. Positions 455–475 (PLLSRGDSGSPARGNQSDCVG) are disordered. Positions 492–507 (ESRGLALKYLLTPVHF) match the TBM motif.

It belongs to the DNA repair metallo-beta-lactamase (DRMBL) family. As to quaternary structure, interacts with MUS81, MRE11 and FANCD2. Interacts with HSPA2, HSPA8 and HSPA14. Interacts with SPAG5. Interacts with TERF2; the interaction is direct. Ubiquitinated, leading to its degradation. Interaction with TERF2 protects it from ubiquitination.

Its subcellular location is the chromosome. It is found in the telomere. The protein resides in the nucleus. The protein localises to the cytoplasm. It localises to the cytoskeleton. Its subcellular location is the microtubule organizing center. It is found in the centrosome. It carries out the reaction a beta-lactam + H2O = a substituted beta-amino acid. 5'-3' exonuclease that plays a central role in telomere maintenance and protection during S-phase. Participates in the protection of telomeres against non-homologous end-joining (NHEJ)-mediated repair, thereby ensuring that telomeres do not fuse. Plays a key role in telomeric loop (T loop) formation by being recruited by TERF2 at the leading end telomeres and by processing leading-end telomeres immediately after their replication via its exonuclease activity: generates 3' single-stranded overhang at the leading end telomeres avoiding blunt leading-end telomeres that are vulnerable to end-joining reactions and expose the telomere end in a manner that activates the DNA repair pathways. Together with TERF2, required to protect telomeres from replicative damage during replication by controlling the amount of DNA topoisomerase (TOP1, TOP2A and TOP2B) needed for telomere replication during fork passage and prevent aberrant telomere topology. Also involved in response to DNA damage: plays a role in response to DNA interstrand cross-links (ICLs) by facilitating double-strand break formation. In case of spindle stress, involved in prophase checkpoint. Possesses beta-lactamase activity, catalyzing the hydrolysis of penicillin G and nitrocefin. Exhibits no activity towards other beta-lactam antibiotic classes including cephalosporins (cefotaxime) and carbapenems (imipenem). The polypeptide is 5' exonuclease Apollo (Dclre1b) (Mus musculus (Mouse)).